The sequence spans 423 residues: 3-phosphoshikimate 1-carboxyvinyltransferase (423 aa).

3-phosphoshikimate-binding residues include Lys21, Ser22, and Arg26. Lys21 serves as a coordination point for phosphoenolpyruvate. Phosphoenolpyruvate is bound by residues Gly92 and Arg120. Residues Ser166, Gln168, Ser194, Asp310, and Lys337 each contribute to the 3-phosphoshikimate site. Residue Gln168 coordinates phosphoenolpyruvate. The Proton acceptor role is filled by Asp310. Residues Arg341, Arg384, and Lys409 each coordinate phosphoenolpyruvate.

This sequence belongs to the EPSP synthase family. As to quaternary structure, monomer.

The protein resides in the cytoplasm. It catalyses the reaction 3-phosphoshikimate + phosphoenolpyruvate = 5-O-(1-carboxyvinyl)-3-phosphoshikimate + phosphate. It functions in the pathway metabolic intermediate biosynthesis; chorismate biosynthesis; chorismate from D-erythrose 4-phosphate and phosphoenolpyruvate: step 6/7. Functionally, catalyzes the transfer of the enolpyruvyl moiety of phosphoenolpyruvate (PEP) to the 5-hydroxyl of shikimate-3-phosphate (S3P) to produce enolpyruvyl shikimate-3-phosphate and inorganic phosphate. This Syntrophobacter fumaroxidans (strain DSM 10017 / MPOB) protein is 3-phosphoshikimate 1-carboxyvinyltransferase.